The chain runs to 317 residues: Coproporphyrinogen-III oxidase, aerobic 1 (317 aa).

Residues 38-47 (VLRDGAIFEQ) form an important for dimerization region. Ser-82 is a binding site for substrate. The active-site Proton donor is His-96. Substrate is bound by residues 98–100 (NYR) and 269–274 (NGRTES). Residues 251–286 (YVEFNLVYDRGTIFGLQTNGRTESILMSLPPLVRWE) are important for dimerization.

Belongs to the aerobic coproporphyrinogen-III oxidase family. As to quaternary structure, homodimer.

The protein resides in the cytoplasm. It carries out the reaction coproporphyrinogen III + O2 + 2 H(+) = protoporphyrinogen IX + 2 CO2 + 2 H2O. It participates in porphyrin-containing compound metabolism; protoporphyrin-IX biosynthesis; protoporphyrinogen-IX from coproporphyrinogen-III (O2 route): step 1/1. Key enzyme in heme biosynthesis. Catalyzes the oxidative decarboxylation of propionic acid side chains of rings A and B of coproporphyrinogen III. This Nostoc sp. (strain PCC 7120 / SAG 25.82 / UTEX 2576) protein is Coproporphyrinogen-III oxidase, aerobic 1.